We begin with the raw amino-acid sequence, 443 residues long: RILP-like protein homolog (443 aa).

In terms of domain architecture, RH1 spans 8–96 (EMGEMVLDAI…ESEKLEKAEF (89 aa)). A coiled-coil region spans residues 59 to 315 (LELLEALATK…TLNEQLAELK (257 aa)). Residues 282–401 (RPRYTTRELK…KSSESGIRKF (120 aa)) form the RH2 domain. The tract at residues 311–394 (LAELKPPSQA…PDDAPWKKSS (84 aa)) is disordered. Over residues 332–355 (DDSDEDDDGHVADNDDDDDEEEAA) the composition is skewed to acidic residues. Residues 356–368 (AEANELEPPAAGE) show a composition bias toward low complexity.

The protein belongs to the RILPL family. As to quaternary structure, interacts with Arl8 (in GTP-bound form).

The protein resides in the lysosome membrane. May have a role in lysosome distribution by interacting with Arl8. In Drosophila melanogaster (Fruit fly), this protein is RILP-like protein homolog.